The chain runs to 215 residues: Adenylate kinase (215 aa).

10–15 (GAGKGT) serves as a coordination point for ATP. The NMP stretch occupies residues 30–59 (STGDLLRAAVAAGTPLGKEAKAYMDRGELV). Residues Thr-31, Arg-36, 57-59 (ELV), 85-88 (GFPR), and Gln-92 each bind AMP. The LID stretch occupies residues 126–163 (GRRTCKSCGQMYNVYYSPSKVEGKCDKCGGELFQRDDD). An ATP-binding site is contributed by Arg-127. Positions 130, 133, 150, and 153 each coordinate Zn(2+). Residues Arg-160 and Arg-171 each contribute to the AMP site. Gly-199 contacts ATP.

The protein belongs to the adenylate kinase family. As to quaternary structure, monomer.

The protein resides in the cytoplasm. It catalyses the reaction AMP + ATP = 2 ADP. The protein operates within purine metabolism; AMP biosynthesis via salvage pathway; AMP from ADP: step 1/1. Functionally, catalyzes the reversible transfer of the terminal phosphate group between ATP and AMP. Plays an important role in cellular energy homeostasis and in adenine nucleotide metabolism. This chain is Adenylate kinase, found in Thermodesulfovibrio yellowstonii (strain ATCC 51303 / DSM 11347 / YP87).